The sequence spans 95 residues: Aspartyl/glutamyl-tRNA(Asn/Gln) amidotransferase subunit C (95 aa).

Belongs to the GatC family. Heterotrimer of A, B and C subunits.

The enzyme catalyses L-glutamyl-tRNA(Gln) + L-glutamine + ATP + H2O = L-glutaminyl-tRNA(Gln) + L-glutamate + ADP + phosphate + H(+). It catalyses the reaction L-aspartyl-tRNA(Asn) + L-glutamine + ATP + H2O = L-asparaginyl-tRNA(Asn) + L-glutamate + ADP + phosphate + 2 H(+). Functionally, allows the formation of correctly charged Asn-tRNA(Asn) or Gln-tRNA(Gln) through the transamidation of misacylated Asp-tRNA(Asn) or Glu-tRNA(Gln) in organisms which lack either or both of asparaginyl-tRNA or glutaminyl-tRNA synthetases. The reaction takes place in the presence of glutamine and ATP through an activated phospho-Asp-tRNA(Asn) or phospho-Glu-tRNA(Gln). The sequence is that of Aspartyl/glutamyl-tRNA(Asn/Gln) amidotransferase subunit C from Rhizobium leguminosarum bv. trifolii (strain WSM2304).